A 269-amino-acid polypeptide reads, in one-letter code: Probable ribosomal RNA small subunit methyltransferase A (269 aa).

The S-adenosyl-L-methionine site is built by His-19, Leu-21, Gly-46, Glu-67, Asp-92, and Asn-107.

This sequence belongs to the class I-like SAM-binding methyltransferase superfamily. rRNA adenine N(6)-methyltransferase family. RsmA subfamily.

The protein localises to the cytoplasm. Its function is as follows. Specifically dimethylates two adjacent adenosines in the loop of a conserved hairpin near the 3'-end of 16S rRNA in the 30S particle. May play a critical role in biogenesis of 30S subunits. This chain is Probable ribosomal RNA small subunit methyltransferase A, found in Methanosarcina acetivorans (strain ATCC 35395 / DSM 2834 / JCM 12185 / C2A).